The chain runs to 610 residues: Major facilitator superfamily multidrug transporter FLU1 (610 aa).

2 N-linked (GlcNAc...) asparagine glycosylation sites follow: Asn3 and Asn21. The segment covering 47–58 (GPTDSVESSSNT) has biased composition (polar residues). The interval 47 to 74 (GPTDSVESSSNTADEENEINSFNAQNVK) is disordered. 11 helical membrane-spanning segments follow: residues 165-185 (ILYC…SAMF), 209-229 (LFVF…ELFG), 231-251 (KLVM…VATA), 262-282 (FFAG…MADM), 292-312 (IAIF…LGAF), 323-343 (WTSY…TFLL), 408-428 (AFIY…FLGE), 437-457 (ELPY…IMLF), 478-498 (LEPM…LGWT), 507-527 (WIVP…IFLP), and 530-550 (NYII…NTFI). A glycan (N-linked (GlcNAc...) asparagine) is linked at Asn568. A helical transmembrane segment spans residues 573 to 593 (WASTLLGCIGILLLPMPFVFY).

Belongs to the major facilitator superfamily. DHA1 family. Polyamines/proton antiporter (TC 2.A.1.2.16) subfamily.

It is found in the cell membrane. Functionally, major facilitator superfamily transporter that mediates resistance to structurally and functionally unrelated compounds including cycloheximide but also azoles such as fuconazole, ketoconazole and itraconazole. Also mediates efflux of histatin 5, a salivary human antimicrobial peptide, and is responsible for reduction of its toxicity in C.albicans. The polypeptide is Major facilitator superfamily multidrug transporter FLU1 (Candida albicans (strain SC5314 / ATCC MYA-2876) (Yeast)).